Reading from the N-terminus, the 106-residue chain is ATP-dependent Clp protease adapter protein ClpS (106 aa).

The span at 1-13 shows a compositional bias: basic and acidic residues; sequence MPRNTSHEHDHGL. The segment at 1 to 20 is disordered; that stretch reads MPRNTSHEHDHGLMVEASKP.

The protein belongs to the ClpS family. Binds to the N-terminal domain of the chaperone ClpA.

In terms of biological role, involved in the modulation of the specificity of the ClpAP-mediated ATP-dependent protein degradation. The protein is ATP-dependent Clp protease adapter protein ClpS of Xanthomonas axonopodis pv. citri (strain 306).